A 475-amino-acid polypeptide reads, in one-letter code: Pregnancy-specific glycoprotein 22 (475 aa).

Positions 1–35 (MEVSSELLSNGWTSWQRVLLTASLLTCWLLPITAG) are cleaved as a signal peptide. 3 Ig-like V-type domains span residues 44 to 140 (KLVE…FLQV), 162 to 260 (PASV…YLQV), and 280 to 380 (PVPP…QVNV). N103, N110, and N231 each carry an N-linked (GlcNAc...) asparagine glycan. Residues 387–471 (PVMRVTDSTV…SKTSLPVRLT (85 aa)) enclose the Ig-like C2-type domain. The cysteines at positions 406 and 454 are disulfide-linked.

The protein belongs to the immunoglobulin superfamily. CEA family.

The protein resides in the secreted. In terms of biological role, may have an angiogenic function during early placental development. Binds to cell-surface heparan sulfate proteoglycans (HSPGs), and stimulates secretion of the proangiogenic factors VEGFA and TGFB from uterine dendritic cells and natural killer cells. Also induces endothelial tube formation in vitro. The polypeptide is Pregnancy-specific glycoprotein 22 (Mus musculus (Mouse)).